A 557-amino-acid polypeptide reads, in one-letter code: Formate--tetrahydrofolate ligase (557 aa).

65-72 (SPAGEGKT) serves as a coordination point for ATP.

It belongs to the formate--tetrahydrofolate ligase family.

The enzyme catalyses (6S)-5,6,7,8-tetrahydrofolate + formate + ATP = (6R)-10-formyltetrahydrofolate + ADP + phosphate. The protein operates within one-carbon metabolism; tetrahydrofolate interconversion. The protein is Formate--tetrahydrofolate ligase of Methylobacillus flagellatus (strain ATCC 51484 / DSM 6875 / VKM B-1610 / KT).